Reading from the N-terminus, the 186-residue chain is Translation initiation factor IF-3 (186 aa).

Residues 1-20 (MINRSAGKDRDRSRSGDKEL) are disordered.

It belongs to the IF-3 family. As to quaternary structure, monomer.

Its subcellular location is the cytoplasm. Its function is as follows. IF-3 binds to the 30S ribosomal subunit and shifts the equilibrium between 70S ribosomes and their 50S and 30S subunits in favor of the free subunits, thus enhancing the availability of 30S subunits on which protein synthesis initiation begins. This Borrelia hermsii (strain HS1 / DAH) protein is Translation initiation factor IF-3.